The primary structure comprises 386 residues: Ethanolamine kinase 2 (386 aa).

The protein belongs to the choline/ethanolamine kinase family. Expressed in kidney, liver, ovary, testis and prostate.

The enzyme catalyses ethanolamine + ATP = phosphoethanolamine + ADP + H(+). It functions in the pathway phospholipid metabolism; phosphatidylethanolamine biosynthesis; phosphatidylethanolamine from ethanolamine: step 1/3. Highly specific for ethanolamine phosphorylation. Does not have choline kinase activity. The sequence is that of Ethanolamine kinase 2 (ETNK2) from Homo sapiens (Human).